The sequence spans 154 residues: 3-hydroxyacyl-[acyl-carrier-protein] dehydratase FabZ (154 aa).

Histidine 54 is a catalytic residue.

It belongs to the thioester dehydratase family. FabZ subfamily.

The protein resides in the cytoplasm. The enzyme catalyses a (3R)-hydroxyacyl-[ACP] = a (2E)-enoyl-[ACP] + H2O. In terms of biological role, involved in unsaturated fatty acids biosynthesis. Catalyzes the dehydration of short chain beta-hydroxyacyl-ACPs and long chain saturated and unsaturated beta-hydroxyacyl-ACPs. This Shewanella sp. (strain MR-4) protein is 3-hydroxyacyl-[acyl-carrier-protein] dehydratase FabZ.